The following is a 436-amino-acid chain: Glutamate-1-semialdehyde 2,1-aminomutase (436 aa).

The residue at position 270 (Lys270) is an N6-(pyridoxal phosphate)lysine.

This sequence belongs to the class-III pyridoxal-phosphate-dependent aminotransferase family. HemL subfamily. As to quaternary structure, homodimer. Pyridoxal 5'-phosphate serves as cofactor.

Its subcellular location is the cytoplasm. The enzyme catalyses (S)-4-amino-5-oxopentanoate = 5-aminolevulinate. It participates in porphyrin-containing compound metabolism; protoporphyrin-IX biosynthesis; 5-aminolevulinate from L-glutamyl-tRNA(Glu): step 2/2. This chain is Glutamate-1-semialdehyde 2,1-aminomutase, found in Cutibacterium acnes (strain DSM 16379 / KPA171202) (Propionibacterium acnes).